A 105-amino-acid chain; its full sequence is Small ribosomal subunit protein uS10 (105 aa).

The protein belongs to the universal ribosomal protein uS10 family. In terms of assembly, part of the 30S ribosomal subunit.

Involved in the binding of tRNA to the ribosomes. The protein is Small ribosomal subunit protein uS10 of Legionella pneumophila (strain Paris).